The sequence spans 393 residues: Cyclin CCL1 (393 aa).

Residues M1–M19 are compositionally biased toward polar residues. Disordered stretches follow at residues M1–D45 and S289–Y325. 2 stretches are compositionally biased toward basic and acidic residues: residues A21–N35 and N300–E321.

This sequence belongs to the cyclin family. Cyclin C subfamily. In terms of assembly, CCL1 and KIN28 form the TFIIK complex, a component of TFIIH holo complex. Component of a complex consisting of KIN28, CCL1 and TFB3.

Regulatory component of the TFIIK complex (KIN28-CCL1 dimer) which is the protein kinase component of transcription factor IIH (TFIIH) and phosphorylates the C-terminal domain of RNA polymerase II during transition from transcription to elongation after preinitiation complex (PIC) formation, thereby positively regulating transcription. TFIIH (or factor B) is essential for both basal and activated transcription, and is involved in nucleotide excision repair (NER) of damaged DNA. TFIIH has DNA-dependent ATPase activity and is essential for polymerase II transcription in vitro. The sequence is that of Cyclin CCL1 (CCL1) from Saccharomyces cerevisiae (strain ATCC 204508 / S288c) (Baker's yeast).